A 705-amino-acid chain; its full sequence is Dolichyl-diphosphooligosaccharide--protein glycosyltransferase subunit STT3A (705 aa).

The Cytoplasmic portion of the chain corresponds to 1 to 17 (MTKFGFLRLSYEKQDTL). Residues 18-38 (LKLLILSMAAVLSFSTRLFAV) traverse the membrane as a helical segment. Residues 39 to 119 (LRFESVIHEF…IDIRNVCVFL (81 aa)) are Lumenal-facing. Positions 47 to 49 (EFD) match the DXD motif 1 motif. Aspartate 49 serves as a coordination point for Mn(2+). A helical transmembrane segment spans residues 120–138 (APLFSSFTTIVTYHLTKEL). Residues 139–140 (KD) are Cytoplasmic-facing. Residues 141-158 (AGAGLLAAAMIAVVPGYI) form a helical membrane-spanning segment. Over 159 to 169 (SRSVAGSYDNE) the chain is Lumenal. Mn(2+)-binding residues include aspartate 167 and glutamate 169. A DXD motif 2 motif is present at residues 167 to 169 (DNE). The helical transmembrane segment at 170–189 (GIAIFCMLLTYYMWIKAVKT) threads the bilayer. The Cytoplasmic segment spans residues 190–191 (GS). Residues 192–206 (ICWAAKCALAYFYMV) form a helical membrane-spanning segment. The Lumenal segment spans residues 207–211 (SSWGG). Residues 212–228 (YVFLINLIPLHVLVLML) form a helical membrane-spanning segment. The Cytoplasmic portion of the chain corresponds to 229–233 (TGRFS). Residues 234–259 (HRIYVAYCTVYCLGTILSMQISFVGF) form a helical membrane-spanning segment. At 260 to 267 (QPVLSSEH) the chain is on the lumenal side. The chain crosses the membrane as a helical span at residues 268–287 (MAAFGVFGLCQIHAFVDYLR). Residues 288–300 (SKLNPQQFEVLFR) are Cytoplasmic-facing. A helical membrane pass occupies residues 301–321 (SVISLVGFVLLTVGALLMLTG). Topologically, residues 322–356 (KISPWTGRFYSLLDPSYAKNNIPIIASVSEHQPTT) are lumenal. Residues 348-351 (SVSE) carry the SVSE motif motif. A helical membrane pass occupies residues 357–379 (WSSYYFDLQLLVFMFPVGLYYCF). Residues 380 to 385 (SNLSDA) lie on the Cytoplasmic side of the membrane. Residues 386–402 (RIFIIMYGVTSMYFSAV) form a helical membrane-spanning segment. Over 403–406 (MVRL) the chain is Lumenal. Position 405 (arginine 405) interacts with dolichyl diphosphooligosaccharide. A helical membrane pass occupies residues 407–428 (MLVLAPVMCILSGIGVSQVLST). The Cytoplasmic portion of the chain corresponds to 429 to 453 (YMKNLDISRPDKKSKKQQDSTYPIK). Residues 454–473 (NEVASGMILVMAFFLITYTF) traverse the membrane as a helical segment. The Lumenal segment spans residues 474 to 705 (HSTWVTSEAY…DLDNRGLSRT (232 aa)). The interval 525–527 (WWD) is interacts with target acceptor peptide in protein substrate. Residues 525 to 529 (WWDYG) carry the WWDYG motif motif. Residue tyrosine 530 participates in dolichyl diphosphooligosaccharide binding. N-linked (GlcNAc...) asparagine glycans are attached at residues asparagine 537 and asparagine 544. A glycan (N-linked (GlcNAc...) (high mannose) asparagine) is linked at asparagine 548. The DK motif signature appears at 592–599 (DINKFLWM).

The protein belongs to the STT3 family. In terms of assembly, component of the oligosaccharyltransferase (OST) complex. There are 2 OST complexes, OST-A and OST-B, which contain STT3A or STT3B as catalytic subunit, respectively. OST-A and OST-B contain common core subunits RPN1, RPN2, OST48, OST4, DAD1 and TMEM258, and OST-A contains DC2/OSTC and KRTCAP2/KCP2 specific accessory subunits. OST-A complex assembly occurs through the formation of 3 subcomplexes. Subcomplex 1 contains RPN1 and TMEM258, subcomplex 2 contains the OST-A-specific subunits STT3A, DC2/OSTC, and KCP2 as well as the core subunit OST4, and subcomplex 3 contains RPN2, DAD1, and OST48. The OST-A complex can form stable complexes with the Sec61 complex or with both the Sec61 and TRAP complexes. It depends on Mg(2+) as a cofactor. Mn(2+) serves as cofactor. Expressed at high levels in placenta, liver, muscle and pancreas, and at very low levels in brain, lung and kidney. Expressed in skin fibroblasts (at protein level).

It localises to the endoplasmic reticulum. Its subcellular location is the endoplasmic reticulum membrane. The enzyme catalyses a di-trans,poly-cis-dolichyl diphosphooligosaccharide + L-asparaginyl-[protein] = N(4)-(oligosaccharide-(1-&gt;4)-N-acetyl-beta-D-glucosaminyl-(1-&gt;4)-N-acetyl-beta-D-glucosaminyl)-L-asparaginyl-[protein] + a di-trans,poly-cis-dolichyl diphosphate + H(+). It participates in protein modification; protein glycosylation. Its activity is regulated as follows. STT3A, but not STT3B, is specifically inhibited by the N-glycosylation inhibitor NGI-235, which prevents productive binding pose of the glycan donor in the active site of STT3A. Functionally, catalytic subunit of the oligosaccharyl transferase (OST) complex that catalyzes the initial transfer of a defined glycan (Glc(3)Man(9)GlcNAc(2) in eukaryotes) from the lipid carrier dolichol-pyrophosphate to an asparagine residue within an Asn-X-Ser/Thr consensus motif in nascent polypeptide chains, the first step in protein N-glycosylation. N-glycosylation occurs cotranslationally and the complex associates with the Sec61 complex at the channel-forming translocon complex that mediates protein translocation across the endoplasmic reticulum (ER). All subunits are required for a maximal enzyme activity. This subunit contains the active site and the acceptor peptide and donor lipid-linked oligosaccharide (LLO) binding pockets. STT3A is present in the majority of OST complexes and mediates cotranslational N-glycosylation of most sites on target proteins, while STT3B-containing complexes are required for efficient post-translational glycosylation and mediate glycosylation of sites that have been skipped by STT3A. STT3A-containing OST-A complex is also required to prevent hyperglycosylation of some target proteins by preventing glycosylation of facultative sites before folding of target proteins is completed. The sequence is that of Dolichyl-diphosphooligosaccharide--protein glycosyltransferase subunit STT3A from Homo sapiens (Human).